We begin with the raw amino-acid sequence, 136 residues long: Large ribosomal subunit protein uL16 (136 aa).

Belongs to the universal ribosomal protein uL16 family. In terms of assembly, part of the 50S ribosomal subunit.

In terms of biological role, binds 23S rRNA and is also seen to make contacts with the A and possibly P site tRNAs. The polypeptide is Large ribosomal subunit protein uL16 (Shewanella halifaxensis (strain HAW-EB4)).